Reading from the N-terminus, the 209-residue chain is Immunoglobulin lambda-like polypeptide 1 (209 aa).

An N-terminal signal peptide occupies residues 1-30; sequence MKLRVGQTLGTIPRQCEVLLLLLLLGLVDG. The interval 93–104 is j region; the sequence is VFGGGTQLTILG. The tract at residues 105–209 is c region; it reads QPKSDPLVTL…EKSVSPAECS (105 aa). Positions 110–204 constitute an Ig-like C1-type domain; it reads PLVTLFLPSL…EGNTVEKSVS (95 aa). Residues Cys-131 and Cys-190 are joined by a disulfide bond.

In terms of assembly, interacts with VPREB1A. Interacts with SYNV1/HRD1 (via N-terminus); this interaction leads to increased IGLL1 ubiquitination and degradation in pre-B cells, possibly through a lysosomal, not proteasomal, pathway. Selectively expressed in pre-B lymphocytes.

It is found in the endoplasmic reticulum. It localises to the secreted. Critical for B-cell development. The chain is Immunoglobulin lambda-like polypeptide 1 (Igll1) from Mus musculus (Mouse).